Here is a 309-residue protein sequence, read N- to C-terminus: Protein FdhE (309 aa).

The protein belongs to the FdhE family.

Its subcellular location is the cytoplasm. Its function is as follows. Necessary for formate dehydrogenase activity. The protein is Protein FdhE of Salmonella arizonae (strain ATCC BAA-731 / CDC346-86 / RSK2980).